A 223-amino-acid chain; its full sequence is Proteasome subunit beta type-1 (223 aa).

The protein belongs to the peptidase T1B family. As to quaternary structure, component of the 20S core complex of the 26S proteasome. The 26S proteasome is composed of a core protease (CP), known as the 20S proteasome, capped at one or both ends by the 19S regulatory particle (RP/PA700). The 20S proteasome core is composed of 28 subunits that are arranged in four stacked rings, resulting in a barrel-shaped structure. The two end rings are each formed by seven alpha subunits, and the two central rings are each formed by seven beta subunits. The catalytic chamber with the active sites is on the inside of the barrel. Present in all tissues examined. Slightly lower levels in roots.

The protein resides in the cytoplasm. Its subcellular location is the nucleus. Functionally, non-catalytic component of the proteasome, a multicatalytic proteinase complex which is characterized by its ability to cleave peptides with Arg, Phe, Tyr, Leu, and Glu adjacent to the leaving group at neutral or slightly basic pH. The proteasome has an ATP-dependent proteolytic activity. The protein is Proteasome subunit beta type-1 (PBF1) of Arabidopsis thaliana (Mouse-ear cress).